Consider the following 75-residue polypeptide: UPF0270 protein Avin_35000 (75 aa).

It belongs to the UPF0270 family.

In Azotobacter vinelandii (strain DJ / ATCC BAA-1303), this protein is UPF0270 protein Avin_35000.